A 208-amino-acid chain; its full sequence is Probable nicotinate-nucleotide adenylyltransferase (208 aa).

This sequence belongs to the NadD family.

It catalyses the reaction nicotinate beta-D-ribonucleotide + ATP + H(+) = deamido-NAD(+) + diphosphate. The protein operates within cofactor biosynthesis; NAD(+) biosynthesis; deamido-NAD(+) from nicotinate D-ribonucleotide: step 1/1. Functionally, catalyzes the reversible adenylation of nicotinate mononucleotide (NaMN) to nicotinic acid adenine dinucleotide (NaAD). The polypeptide is Probable nicotinate-nucleotide adenylyltransferase (Trichormus variabilis (strain ATCC 29413 / PCC 7937) (Anabaena variabilis)).